The chain runs to 364 residues: UDP-N-acetylglucosamine--N-acetylmuramyl-(pentapeptide) pyrophosphoryl-undecaprenol N-acetylglucosamine transferase (364 aa).

UDP-N-acetyl-alpha-D-glucosamine is bound by residues Thr-10–Gly-12, Asn-126, Arg-167, Ser-199, Ile-253, and Gln-298.

It belongs to the glycosyltransferase 28 family. MurG subfamily.

The protein localises to the cell inner membrane. It catalyses the reaction di-trans,octa-cis-undecaprenyl diphospho-N-acetyl-alpha-D-muramoyl-L-alanyl-D-glutamyl-meso-2,6-diaminopimeloyl-D-alanyl-D-alanine + UDP-N-acetyl-alpha-D-glucosamine = di-trans,octa-cis-undecaprenyl diphospho-[N-acetyl-alpha-D-glucosaminyl-(1-&gt;4)]-N-acetyl-alpha-D-muramoyl-L-alanyl-D-glutamyl-meso-2,6-diaminopimeloyl-D-alanyl-D-alanine + UDP + H(+). Its pathway is cell wall biogenesis; peptidoglycan biosynthesis. Its function is as follows. Cell wall formation. Catalyzes the transfer of a GlcNAc subunit on undecaprenyl-pyrophosphoryl-MurNAc-pentapeptide (lipid intermediate I) to form undecaprenyl-pyrophosphoryl-MurNAc-(pentapeptide)GlcNAc (lipid intermediate II). The protein is UDP-N-acetylglucosamine--N-acetylmuramyl-(pentapeptide) pyrophosphoryl-undecaprenol N-acetylglucosamine transferase of Amoebophilus asiaticus (strain 5a2).